Reading from the N-terminus, the 285-residue chain is Guanylate kinase 2, chloroplastic/mitochondrial (285 aa).

Residues 1 to 19 (MLLTRRFSSALARSPLLPR) are compositionally biased toward low complexity. Residues 1 to 42 (MLLTRRFSSALARSPLLPRSLPPPRAVPATPPAPRPPPRRLM) constitute a chloroplast and mitochondrion transit peptide. Residues 1–66 (MLLTRRFSSA…PPPPSGADKD (66 aa)) are disordered. Pro residues predominate over residues 20–36 (SLPPPRAVPATPPAPRP). Over residues 40 to 50 (RLMSSSSSGWH) the composition is skewed to low complexity. The 182-residue stretch at 91 to 272 (PMILVISGPS…AVKQVESIID (182 aa)) folds into the Guanylate kinase-like domain. 98–105 (GPSGVGKD) serves as a coordination point for ATP. Residues Arg-130, Arg-224, and Arg-235 contribute to the active site. Residue Asn-255 coordinates ATP.

Belongs to the guanylate kinase family. In terms of assembly, monomer.

The protein resides in the plastid. Its subcellular location is the chloroplast. It localises to the mitochondrion. It carries out the reaction GMP + ATP = GDP + ADP. Essential for recycling GMP and indirectly, cGMP. Essential for chloroplast differentiation at early stage of leaf development. May not be involved in the synthesis and maintenance of the organellar DNA during leaf development. The polypeptide is Guanylate kinase 2, chloroplastic/mitochondrial (V2) (Oryza sativa subsp. japonica (Rice)).